A 377-amino-acid chain; its full sequence is Succinyl-diaminopimelate desuccinylase (377 aa).

His-68 is a binding site for Zn(2+). Residue Asp-70 is part of the active site. A Zn(2+)-binding site is contributed by Asp-101. Glu-135 functions as the Proton acceptor in the catalytic mechanism. Zn(2+) is bound by residues Glu-136, Glu-164, and His-350.

The protein belongs to the peptidase M20A family. DapE subfamily. As to quaternary structure, homodimer. It depends on Zn(2+) as a cofactor. Co(2+) is required as a cofactor.

The enzyme catalyses N-succinyl-(2S,6S)-2,6-diaminopimelate + H2O = (2S,6S)-2,6-diaminopimelate + succinate. It participates in amino-acid biosynthesis; L-lysine biosynthesis via DAP pathway; LL-2,6-diaminopimelate from (S)-tetrahydrodipicolinate (succinylase route): step 3/3. Functionally, catalyzes the hydrolysis of N-succinyl-L,L-diaminopimelic acid (SDAP), forming succinate and LL-2,6-diaminopimelate (DAP), an intermediate involved in the bacterial biosynthesis of lysine and meso-diaminopimelic acid, an essential component of bacterial cell walls. In Aliivibrio fischeri (strain MJ11) (Vibrio fischeri), this protein is Succinyl-diaminopimelate desuccinylase.